The chain runs to 95 residues: MYRNEFTAWYRRMSVVYGIGTWSVLGSLLYYSRTMAKSSVDQKDGSASEVPSELSERPKGFYVETVVTYKEDFVPNTEKILNYWKSWTGGPGTEP.

The helical transmembrane segment at 13-35 threads the bilayer; sequence MSVVYGIGTWSVLGSLLYYSRTM.

Belongs to the SMIM26 family. In terms of assembly, interacts with AGK and SLC25A11. Detected in kidney (at protein level).

The protein localises to the mitochondrion outer membrane. Its function is as follows. May play a role in cell viability. The sequence is that of Small integral membrane protein 26 from Homo sapiens (Human).